Reading from the N-terminus, the 110-residue chain is Probable ribonuclease HepT (110 aa).

Residues arginine 75 and histidine 80 contribute to the active site. The RX(4)HXY motif motif lies at 75 to 82; it reads RDKLIHAY. The residue at position 82 (tyrosine 82) is an O-di-AMP-tyrosine.

This sequence belongs to the HepT RNase toxin family. Modified by cognate antitoxin MntA; probably at least 2 successive AMPylation events occur on Tyr-82.

Its function is as follows. Toxic component of a type VII toxin-antitoxin (TA) system. Overexpression in E.coli inhibits cell growth. Neutralized by cognate antitoxin MntA. Neutralization is probably due to AMPylation by MntA. Probably an RNAase. This is Probable ribonuclease HepT from Thermococcus cleftensis (strain DSM 27260 / KACC 17922 / CL1).